The primary structure comprises 182 residues: MLVLVLGDLHIPHRCNSLPAKFKKLLVPGKIQHILCTGNLCTKESYDYLKTLAGDVHIVRGDFDENLNYPEQKVVTVGQFKIGLIHGHQVIPWGDMASLALLQRQFDVDILISGHTHKFEAFEHENKFYINPGSATGAYNALETNIIPSFVLMDIQASTVVTYVYQLIGDDVKVERIEYKKP.

Positions 8, 10, and 39 each coordinate Zn(2+). Lys-50 bears the N6-acetyllysine mark. Zn(2+) contacts are provided by Asp-62, His-86, His-115, and His-117.

This sequence belongs to the VPS29 family. Component of the commander complex consisting of the CCC subcomplex and the retriever subcomplex. Component of the heterotrimeric retriever complex formed by VPS26C, VPS29 and VPS35L; within the complex interacts with VPS35L. Component of the heterotrimeric retromer cargo-selective complex (CSC), also described as vacuolar protein sorting subcomplex (VPS), formed by VPS26 (VPS26A or VPS26B), VPS29 and VPS35. The CSC has a highly elongated structure with VPS26 and VPS29 binding independently at opposite distal ends of VPS35 as central platform. The CSC is believed to associate with variable sorting nexins to form functionally distinct retromer complex variants. The originally described retromer complex (also called SNX-BAR retromer) is a pentamer containing the CSC and a heterodimeric membrane-deforming subcomplex formed between SNX1 or SNX2 and SNX5 or SNX6 (also called SNX-BAR subcomplex); the respective CSC and SNX-BAR subcomplexes associate with low affinity. The CSC associates with SNX3 to form a SNX3-retromer complex. The CSC associates with SNX27, the WASH complex and the SNX-BAR subcomplex to form the SNX27-retromer complex. Interacts with VPS26A, VPS35, SNX1, SNX2, SNX3, SNX27, WASHC5. Interacts with TBC1D5; this interaction is blocked by VPS35L in the retriever complex. Interacts with SNX17; the interaction is indirect; SNX17 (via its C-terminus) interacts with the retriever complex (via VPS26C and VPS35L). Interacts with VPS26B and ANKRD27. As to quaternary structure, (Microbial infection) Interacts with human papillomavirus 16 minor capsid protein L2 (via C-terminus); this interaction mediates the transport of the capsid from the early endosome to the Golgi apparatus. In terms of tissue distribution, ubiquitous. Highly expressed in heart, lung, placenta, spleen, peripheral blood leukocytes, thymus, colon skeletal muscle, kidney and brain.

The protein resides in the cytoplasm. It is found in the membrane. Its subcellular location is the endosome membrane. It localises to the early endosome. The protein localises to the late endosome. In terms of biological role, component of the commander complex that is essential for endosomal recycling of transmembrane cargos; the commander complex is composed of the CCC subcomplex and the retriever subcomplex. Component of the retriever complex, which is a heterotrimeric complex related to retromer cargo-selective complex (CSC) and essential for retromer-independent retrieval and recycling of numerous cargos such as integrin alpha-5/beta-1 (ITGA5:ITGB1). Component of the retromer cargo-selective complex (CSC). The CSC is believed to be the core functional component of retromer or respective retromer complex variants acting to prevent missorting of selected transmembrane cargo proteins into the lysosomal degradation pathway. The recruitment of the CSC to the endosomal membrane involves RAB7A and SNX3. The SNX-BAR retromer mediates retrograde transport of cargo proteins from endosomes to the trans-Golgi network (TGN) and is involved in endosome-to-plasma membrane transport for cargo protein recycling. The SNX3-retromer mediates the retrograde endosome-to-TGN transport of WLS distinct from the SNX-BAR retromer pathway. The SNX27-retromer is believed to be involved in endosome-to-plasma membrane trafficking and recycling of a broad spectrum of cargo proteins. The CSC seems to act as recruitment hub for other proteins, such as the WASH complex and TBC1D5. Required to regulate transcytosis of the polymeric immunoglobulin receptor (pIgR-pIgA). In the endosomes, retriever complex drives the retrieval and recycling of NxxY-motif-containing cargo proteins by coupling to SNX17, a cargo essential for the homeostatic maintenance of numerous cell surface proteins associated with processes that include cell migration, cell adhesion, nutrient supply and cell signaling. The recruitment of the retriever complex to the endosomal membrane involves CCC and WASH complexes. Involved in GLUT1 endosome-to-plasma membrane trafficking; the function is dependent of association with ANKRD27. Functionally, (Microbial infection) The heterotrimeric retromer cargo-selective complex (CSC) mediates the exit of human papillomavirus from the early endosome and the delivery to the Golgi apparatus. This is Vacuolar protein sorting-associated protein 29 from Homo sapiens (Human).